We begin with the raw amino-acid sequence, 324 residues long: Acetyl-coenzyme A carboxylase carboxyl transferase subunit alpha (324 aa).

The CoA carboxyltransferase C-terminal domain occupies 44-298 (ILQRKLLNLK…KNKIRDQLDF (255 aa)).

It belongs to the AccA family. In terms of assembly, acetyl-CoA carboxylase is a heterohexamer composed of biotin carboxyl carrier protein (accB), biotin carboxylase (accC) and two subunits each of ACCase subunit alpha (accA) and ACCase subunit beta (accD).

It localises to the plastid. The protein resides in the chloroplast. It catalyses the reaction N(6)-carboxybiotinyl-L-lysyl-[protein] + acetyl-CoA = N(6)-biotinyl-L-lysyl-[protein] + malonyl-CoA. It participates in lipid metabolism; malonyl-CoA biosynthesis; malonyl-CoA from acetyl-CoA: step 1/1. Functionally, component of the acetyl coenzyme A carboxylase (ACC) complex. First, biotin carboxylase catalyzes the carboxylation of biotin on its carrier protein (BCCP) and then the CO(2) group is transferred by the carboxyltransferase to acetyl-CoA to form malonyl-CoA. This chain is Acetyl-coenzyme A carboxylase carboxyl transferase subunit alpha, found in Cyanidium caldarium (Red alga).